The primary structure comprises 766 residues: ABC-type oligopeptide transporter ABCB9 (766 aa).

8 helical membrane-spanning segments follow: residues 7 to 27 (VVVT…IYVF), 47 to 67 (VLDL…ATIG), 84 to 104 (LVIT…LLLF), 116 to 136 (FWAL…LWWL), 185 to 205 (VAFL…ETFL), 225 to 245 (FSTA…AAGI), 319 to 339 (VFMF…FPII), and 416 to 436 (SGLT…HLVI). An ABC transmembrane type-1 domain is found at 188-471 (LVAASFFLIV…VGSVYSGLMQ (284 aa)). The ABC transporter domain occupies 504-740 (VDFENVTFTY…GGLYAKLVQR (237 aa)). 539-546 (GPSGSGKS) serves as a coordination point for ATP.

The protein belongs to the ABC transporter superfamily. ABCB family. MHC peptide exporter (TC 3.A.1.209) subfamily. In terms of assembly, homodimer. Interacts (via TMD0 region) with LAMP1; this interaction strongly stabilizes ABCB9 and protects ABCB9 against lysosomal degradation. Interacts (via TMD0 region) with LAMP2 (isoform LAMP-2B). Interacts (via TMD0) with YIF1B; this interaction allows (but is not essential) the ER-to-Golgi trafficking and strongly depends on a salt bridge within TMD0. In terms of tissue distribution, highly expressed in testis, and at moderate levels in brain, spinal cord, and thyroid. Not expressed in monocytes but strongly expressed during differentiation of monocytes to dendritic cells and macrophages.

It localises to the lysosome membrane. It carries out the reaction a [oligopeptide](in) + ATP + H2O = a [oligopeptide](out) + ADP + phosphate + H(+). Transport activity is limited by threshold levels of luminal peptide. ATP hydrolysis is reduced in the presence of the spatial challenging 18-mer peptide by 50% and the branched 16-mer peptide by 75%. Transport rate of the longer peptides is strongly reduced. ATP-dependent low-affinity peptide transporter which translocates a broad spectrum of peptides from the cytosol to the lysosomal lumen for degradation. Displays a broad peptide length specificity from 6-mer up to at least 59-mer peptides with an optimum of 23-mers. Binds and transports smaller and larger peptides with the same affinity. Favors positively charged, aromatic or hydrophobic residues in the N- and C-terminal positions whereas negatively charged residues as well as asparagine and methionine are not favored. The protein is ABC-type oligopeptide transporter ABCB9 of Homo sapiens (Human).